We begin with the raw amino-acid sequence, 450 residues long: 3-phosphoshikimate 1-carboxyvinyltransferase (450 aa).

3-phosphoshikimate contacts are provided by lysine 28, serine 29, and arginine 33. Position 28 (lysine 28) interacts with phosphoenolpyruvate. Phosphoenolpyruvate contacts are provided by glycine 100 and arginine 128. 3-phosphoshikimate is bound by residues serine 173, glutamine 175, aspartate 326, and lysine 353. Residue glutamine 175 coordinates phosphoenolpyruvate. Aspartate 326 (proton acceptor) is an active-site residue. Residues arginine 357 and arginine 402 each contribute to the phosphoenolpyruvate site.

This sequence belongs to the EPSP synthase family. In terms of assembly, monomer.

It is found in the cytoplasm. The catalysed reaction is 3-phosphoshikimate + phosphoenolpyruvate = 5-O-(1-carboxyvinyl)-3-phosphoshikimate + phosphate. It functions in the pathway metabolic intermediate biosynthesis; chorismate biosynthesis; chorismate from D-erythrose 4-phosphate and phosphoenolpyruvate: step 6/7. Its function is as follows. Catalyzes the transfer of the enolpyruvyl moiety of phosphoenolpyruvate (PEP) to the 5-hydroxyl of shikimate-3-phosphate (S3P) to produce enolpyruvyl shikimate-3-phosphate and inorganic phosphate. This is 3-phosphoshikimate 1-carboxyvinyltransferase from Brucella canis (strain ATCC 23365 / NCTC 10854 / RM-666).